A 533-amino-acid polypeptide reads, in one-letter code: CTP synthase (533 aa).

The segment at 1–268 (MGETKYIFVT…DETILQKMGL (268 aa)) is amidoligase domain. Serine 15 contributes to the CTP binding site. Position 15 (serine 15) interacts with UTP. An ATP-binding site is contributed by 16 to 21 (SLGKGI). Tyrosine 56 is a binding site for L-glutamine. Aspartate 73 contributes to the ATP binding site. Residues aspartate 73 and glutamate 143 each coordinate Mg(2+). Residues 150–152 (DIE), 189–194 (KTKPTQ), and lysine 225 contribute to the CTP site. UTP is bound by residues 189-194 (KTKPTQ) and lysine 225. Residues 301–533 (YVELQDAYKS…VSFIKAAIDK (233 aa)) enclose the Glutamine amidotransferase type-1 domain. Glycine 356 contributes to the L-glutamine binding site. Catalysis depends on cysteine 383, which acts as the Nucleophile; for glutamine hydrolysis. L-glutamine contacts are provided by residues 384–387 (LGMQ), glutamate 407, and arginine 464. Residues histidine 509 and glutamate 511 contribute to the active site.

Belongs to the CTP synthase family. As to quaternary structure, homotetramer.

The catalysed reaction is UTP + L-glutamine + ATP + H2O = CTP + L-glutamate + ADP + phosphate + 2 H(+). It catalyses the reaction L-glutamine + H2O = L-glutamate + NH4(+). It carries out the reaction UTP + NH4(+) + ATP = CTP + ADP + phosphate + 2 H(+). The protein operates within pyrimidine metabolism; CTP biosynthesis via de novo pathway; CTP from UDP: step 2/2. Allosterically activated by GTP, when glutamine is the substrate; GTP has no effect on the reaction when ammonia is the substrate. The allosteric effector GTP functions by stabilizing the protein conformation that binds the tetrahedral intermediate(s) formed during glutamine hydrolysis. Inhibited by the product CTP, via allosteric rather than competitive inhibition. Functionally, catalyzes the ATP-dependent amination of UTP to CTP with either L-glutamine or ammonia as the source of nitrogen. Regulates intracellular CTP levels through interactions with the four ribonucleotide triphosphates. This is CTP synthase from Bacteroides fragilis (strain YCH46).